Reading from the N-terminus, the 321-residue chain is Glucokinase (321 aa).

Residue 8–13 (GDVGGT) participates in ATP binding.

The protein belongs to the bacterial glucokinase family.

The protein resides in the cytoplasm. The catalysed reaction is D-glucose + ATP = D-glucose 6-phosphate + ADP + H(+). The sequence is that of Glucokinase from Salmonella choleraesuis (strain SC-B67).